We begin with the raw amino-acid sequence, 172 residues long: NAD(P)H-quinone oxidoreductase subunit I, chloroplastic (172 aa).

4Fe-4S ferredoxin-type domains are found at residues 55–84 (GRIH…VDWK) and 95–124 (LNYS…MTEE). Cys-64, Cys-67, Cys-70, Cys-74, Cys-104, Cys-107, Cys-110, and Cys-114 together coordinate [4Fe-4S] cluster.

It belongs to the complex I 23 kDa subunit family. In terms of assembly, NDH is composed of at least 16 different subunits, 5 of which are encoded in the nucleus. The cofactor is [4Fe-4S] cluster.

It is found in the plastid. The protein resides in the chloroplast thylakoid membrane. The enzyme catalyses a plastoquinone + NADH + (n+1) H(+)(in) = a plastoquinol + NAD(+) + n H(+)(out). It catalyses the reaction a plastoquinone + NADPH + (n+1) H(+)(in) = a plastoquinol + NADP(+) + n H(+)(out). In terms of biological role, NDH shuttles electrons from NAD(P)H:plastoquinone, via FMN and iron-sulfur (Fe-S) centers, to quinones in the photosynthetic chain and possibly in a chloroplast respiratory chain. The immediate electron acceptor for the enzyme in this species is believed to be plastoquinone. Couples the redox reaction to proton translocation, and thus conserves the redox energy in a proton gradient. This Crucihimalaya wallichii (Rock-cress) protein is NAD(P)H-quinone oxidoreductase subunit I, chloroplastic.